The chain runs to 251 residues: Aspartate/glutamate leucyltransferase (251 aa).

The protein belongs to the R-transferase family. Bpt subfamily.

The protein resides in the cytoplasm. It carries out the reaction N-terminal L-glutamyl-[protein] + L-leucyl-tRNA(Leu) = N-terminal L-leucyl-L-glutamyl-[protein] + tRNA(Leu) + H(+). The catalysed reaction is N-terminal L-aspartyl-[protein] + L-leucyl-tRNA(Leu) = N-terminal L-leucyl-L-aspartyl-[protein] + tRNA(Leu) + H(+). Functionally, functions in the N-end rule pathway of protein degradation where it conjugates Leu from its aminoacyl-tRNA to the N-termini of proteins containing an N-terminal aspartate or glutamate. The polypeptide is Aspartate/glutamate leucyltransferase (Stenotrophomonas maltophilia (strain K279a)).